The primary structure comprises 507 residues: Pyruvate kinase (507 aa).

R50 is a substrate binding site. N52, S54, D84, and T85 together coordinate K(+). 52 to 55 is an ATP binding site; the sequence is NFSH. Residues R91 and K177 each contribute to the ATP site. Residue E242 coordinates Mg(2+). Substrate is bound by residues G265, D266, and T298. D266 is a binding site for Mg(2+).

It belongs to the pyruvate kinase family. In terms of assembly, homotetramer. Mg(2+) serves as cofactor. Requires K(+) as cofactor.

The enzyme catalyses pyruvate + ATP = phosphoenolpyruvate + ADP + H(+). It functions in the pathway carbohydrate degradation; glycolysis; pyruvate from D-glyceraldehyde 3-phosphate: step 5/5. The polypeptide is Pyruvate kinase (pyk) (Dictyostelium discoideum (Social amoeba)).